The sequence spans 484 residues: MPSETAVPPPHPIPPDGGWGWVVVGAAFISIGFSYAFPKAVTVFFKDIQQIFQASYSEIAWISSIMLAVMYAGGPISSVLVNNYGSRPVVIIGGLLCCTGMILASFSNSVLELYLTIGFIGGLGLAFNLQPALTIIGKYFYRRRPMANGLAMAGSPVFLSSLAPFNQYLFNSYGWKGSFLILGGIFLHSCVAGCLMRPVQTSPRKSKSKSKVGSRQDGSMKKASKVSTAEKINRFLDFSLFKHRGFLIYLSGNVIMFLGFFAPIIFLAPYAKDKGVDEYNAALLLSVMAFVDMFARPTGGLIANSKLIRPRIQYFFSFAIVFTGICHLLCPLADTYPALVVYSIFFGYGFGSVSSVLFETLMDLVGPARFSSAVGLATIVECCPVLLGPPLAGKLVDKTKDYKYMYIASGTIVVISGIYLFIGNAINYRLLAKERKREKARKKKSATHPSRESEALSRSKQDDVSVKVSNPHNSPSDRERESNI.

Over 1 to 16 (MPSETAVPPPHPIPPD) the chain is Cytoplasmic. A helical membrane pass occupies residues 17-37 (GGWGWVVVGAAFISIGFSYAF). At 38-60 (PKAVTVFFKDIQQIFQASYSEIA) the chain is on the extracellular side. The helical transmembrane segment at 61–81 (WISSIMLAVMYAGGPISSVLV) threads the bilayer. Residues 82–87 (NNYGSR) lie on the Cytoplasmic side of the membrane. Residues 88-108 (PVVIIGGLLCCTGMILASFSN) traverse the membrane as a helical segment. Topologically, residues 109–116 (SVLELYLT) are extracellular. A helical transmembrane segment spans residues 117 to 137 (IGFIGGLGLAFNLQPALTIIG). The Cytoplasmic segment spans residues 138–144 (KYFYRRR). Residues 145–165 (PMANGLAMAGSPVFLSSLAPF) form a helical membrane-spanning segment. The Extracellular portion of the chain corresponds to 166–174 (NQYLFNSYG). A helical transmembrane segment spans residues 175–195 (WKGSFLILGGIFLHSCVAGCL). Topologically, residues 196-245 (MRPVQTSPRKSKSKSKVGSRQDGSMKKASKVSTAEKINRFLDFSLFKHRG) are cytoplasmic. The interval 201–224 (TSPRKSKSKSKVGSRQDGSMKKAS) is disordered. Residues 246-266 (FLIYLSGNVIMFLGFFAPIIF) form a helical membrane-spanning segment. Residues 267–282 (LAPYAKDKGVDEYNAA) are Extracellular-facing. The helical transmembrane segment at 283 to 303 (LLLSVMAFVDMFARPTGGLIA) threads the bilayer. The Cytoplasmic segment spans residues 304–311 (NSKLIRPR). A helical membrane pass occupies residues 312-332 (IQYFFSFAIVFTGICHLLCPL). Topologically, residues 333-337 (ADTYP) are extracellular. A helical membrane pass occupies residues 338-358 (ALVVYSIFFGYGFGSVSSVLF). At 359 to 372 (ETLMDLVGPARFSS) the chain is on the cytoplasmic side. Residues 373-393 (AVGLATIVECCPVLLGPPLAG) traverse the membrane as a helical segment. Over 394–405 (KLVDKTKDYKYM) the chain is Extracellular. A helical membrane pass occupies residues 406 to 426 (YIASGTIVVISGIYLFIGNAI). The Cytoplasmic portion of the chain corresponds to 427 to 484 (NYRLLAKERKREKARKKKSATHPSRESEALSRSKQDDVSVKVSNPHNSPSDRERESNI). Positions 437 to 484 (REKARKKKSATHPSRESEALSRSKQDDVSVKVSNPHNSPSDRERESNI) are disordered. 2 stretches are compositionally biased toward basic and acidic residues: residues 449 to 465 (PSRESEALSRSKQDDVS) and 475 to 484 (PSDRERESNI).

Belongs to the major facilitator superfamily. Monocarboxylate porter (TC 2.A.1.13) family. In terms of assembly, homodimer. Interacts with GRID2IP. Interacts with EMB; interaction mediates SLC16A7 targeting to the plasma membrane. Interacts with isoform 2 of BSG. In terms of tissue distribution, abundant on the surface of hepatocytes. Present on parietal cells of the oxyntic gland of the stomach, on the basolateral surface of epithelial cells in the collecting ducts of the kidney, on sperm tails throughout the epididymis. Expressed in mitochondria-rich skeletal muscle fibers and cardiac myocytes (at protein level).

It localises to the cell membrane. It is found in the basolateral cell membrane. The protein resides in the cytoplasm. It catalyses the reaction pyruvate(out) + H(+)(out) = pyruvate(in) + H(+)(in). The catalysed reaction is 3-methyl-2-oxobutanoate(out) + H(+)(out) = 3-methyl-2-oxobutanoate(in) + H(+)(in). The enzyme catalyses (S)-lactate(in) + H(+)(in) = (S)-lactate(out) + H(+)(out). It carries out the reaction acetoacetate(out) + H(+)(out) = acetoacetate(in) + H(+)(in). It catalyses the reaction (R)-3-hydroxybutanoate(out) + H(+)(out) = (R)-3-hydroxybutanoate(in) + H(+)(in). The catalysed reaction is 4-methyl-2-oxopentanoate(out) + H(+)(out) = 4-methyl-2-oxopentanoate(in) + H(+)(in). The enzyme catalyses (S)-3-hydroxybutanoate(out) + H(+)(out) = (S)-3-hydroxybutanoate(in) + H(+)(in). Transport activity exhibits steep dependence on substrate concentration. Substrate concentration sensitivity of SLC16A7 arises from the strong inter-subunit cooperativity of the SLC16A7 dimer during transport. Inhibited by AR-C155858. Functionally, proton-coupled monocarboxylate symporter. Catalyzes the rapid transport across the plasma membrane of monocarboxylates such as L-lactate, pyruvate and ketone bodies, acetoacetate, beta-hydroxybutyrate and acetate. Dimerization is functionally required and both subunits work cooperatively in transporting substrate. This chain is Monocarboxylate transporter 2 (SLC16A7), found in Mesocricetus auratus (Golden hamster).